The primary structure comprises 506 residues: Glutamate--tRNA ligase (506 aa).

The 'HIGH' region signature appears at proline 12–threonine 22. A 'KMSKS' region motif is present at residues lysine 253–arginine 257. An ATP-binding site is contributed by lysine 256.

It belongs to the class-I aminoacyl-tRNA synthetase family. Glutamate--tRNA ligase type 1 subfamily. Monomer.

It localises to the cytoplasm. The catalysed reaction is tRNA(Glu) + L-glutamate + ATP = L-glutamyl-tRNA(Glu) + AMP + diphosphate. In terms of biological role, catalyzes the attachment of glutamate to tRNA(Glu) in a two-step reaction: glutamate is first activated by ATP to form Glu-AMP and then transferred to the acceptor end of tRNA(Glu). This chain is Glutamate--tRNA ligase, found in Chlamydia trachomatis serovar L2 (strain ATCC VR-902B / DSM 19102 / 434/Bu).